A 316-amino-acid polypeptide reads, in one-letter code: Olfactory receptor 1N2 (316 aa).

Over 1–28 (MGKPGRVNQTTVSDFLLLGLSEWPEEQP) the chain is Extracellular. The N-linked (GlcNAc...) asparagine glycan is linked to N8. Residues 29–49 (LLFGIFLGMYLVTMVGNLLII) traverse the membrane as a helical segment. The Cytoplasmic segment spans residues 50-60 (LAISSDPHLHT). The chain crosses the membrane as a helical span at residues 61–81 (PMYFFLANLSLTDACFTSASI). Topologically, residues 82 to 100 (PKMLANIHTQSQIISYSGC) are extracellular. C100 and C182 form a disulfide bridge. The chain crosses the membrane as a helical span at residues 101–121 (LAQLYFLLMFGGLDNCLLAVM). Topologically, residues 122–145 (AYDRYVAICQPLHYSTSMSPQLCA) are cytoplasmic. The helical transmembrane segment at 146 to 166 (LMLGVCWVLTNCPALMHTLLL) threads the bilayer. The Extracellular segment spans residues 167 to 199 (TRVAFCAQKAIPHFYCDPSALLKLACSDTHVNE). Residues 200–220 (LMIITMGLLFLTVPLLLIVFS) form a helical membrane-spanning segment. Over 221 to 243 (YVRIFWAVFVISSPGGRWKAFST) the chain is Cytoplasmic. A helical transmembrane segment spans residues 244-264 (CGSHLTVVLLFYGSLMGVYLL). Residues 265–274 (PPSTYSTERE) are Extracellular-facing. A helical transmembrane segment spans residues 275 to 295 (SRAAVLYMVIIPTLNPFIYSL). Residues 296-316 (RNRDMKEALGKLFVSGKTFFL) lie on the Cytoplasmic side of the membrane.

The protein belongs to the G-protein coupled receptor 1 family.

The protein localises to the membrane. Its function is as follows. Odorant receptor. The sequence is that of Olfactory receptor 1N2 (OR1N2) from Homo sapiens (Human).